The sequence spans 1032 residues: Error-prone DNA polymerase (1032 aa).

The protein belongs to the DNA polymerase type-C family. DnaE2 subfamily.

It is found in the cytoplasm. It catalyses the reaction DNA(n) + a 2'-deoxyribonucleoside 5'-triphosphate = DNA(n+1) + diphosphate. DNA polymerase involved in damage-induced mutagenesis and translesion synthesis (TLS). It is not the major replicative DNA polymerase. This is Error-prone DNA polymerase from Hahella chejuensis (strain KCTC 2396).